The sequence spans 43 residues: FTCDVLGFEIAGTKLNSAACGAHCLALGRRGGYCNSKSVCVCR.

3 disulfides stabilise this stretch: Cys-3-Cys-34, Cys-20-Cys-40, and Cys-24-Cys-42.

Belongs to the invertebrate defensin family. Type 1 subfamily.

Its subcellular location is the secreted. Functionally, involved in anti Gram-positive activity of immune hemolymph of Z.atratus. The protein is Defensin, isoforms B and C of Zophobas atratus (Giant mealworm beetle).